Reading from the N-terminus, the 236-residue chain is 7-cyano-7-deazaguanine synthase (236 aa).

C7 to A17 is a binding site for ATP. C185, C193, C196, and C199 together coordinate Zn(2+).

It belongs to the QueC family. Zn(2+) serves as cofactor.

The enzyme catalyses 7-carboxy-7-deazaguanine + NH4(+) + ATP = 7-cyano-7-deazaguanine + ADP + phosphate + H2O + H(+). It functions in the pathway purine metabolism; 7-cyano-7-deazaguanine biosynthesis. Its function is as follows. Catalyzes the ATP-dependent conversion of 7-carboxy-7-deazaguanine (CDG) to 7-cyano-7-deazaguanine (preQ(0)). The protein is 7-cyano-7-deazaguanine synthase of Rhizobium etli (strain CIAT 652).